Here is a 176-residue protein sequence, read N- to C-terminus: Ribosome rescue factor SmrB (176 aa).

The 76-residue stretch at 98 to 173 (LDLHGLTQMQ…GTAAILLLVE (76 aa)) folds into the Smr domain.

This sequence belongs to the SmrB family. Associates with collided ribosomes, but not with correctly translating polysomes.

Its function is as follows. Acts as a ribosome collision sensor. Detects stalled/collided disomes (pairs of ribosomes where the leading ribosome is stalled and a second ribosome has collided with it) and endonucleolytically cleaves mRNA at the 5' boundary of the stalled ribosome. Stalled/collided disomes form a new interface (primarily via the 30S subunits) that binds SmrB. Cleaved mRNA becomes available for tmRNA ligation, leading to ribosomal subunit dissociation and rescue of stalled ribosomes. The protein is Ribosome rescue factor SmrB of Serratia proteamaculans (strain 568).